Consider the following 128-residue polypeptide: Small ribosomal subunit protein uS11m (128 aa).

It belongs to the universal ribosomal protein uS11 family.

It is found in the mitochondrion. The protein is Small ribosomal subunit protein uS11m (RPS11) of Prototheca wickerhamii.